The chain runs to 699 residues: Osmotic avoidance abnormal protein 3 (699 aa).

One can recognise a Kinesin motor domain in the interval serine 4–isoleucine 327. Glycine 87–threonine 94 provides a ligand contact to ATP. Residues aspartate 339–glutamate 523 are a coiled coil.

This sequence belongs to the TRAFAC class myosin-kinesin ATPase superfamily. Kinesin family. Kinesin II subfamily. Expressed in an exclusive set of 26 chemosensory neurons whose dendritic endings are exposed to the external environment; six IL2 neurons of the inner labial sensilla, 8 pairs of amphid neurons in the head, and 2 pairs of phasmid neurons in the tail.

Its subcellular location is the cytoplasm. The protein resides in the cytoskeleton. The protein localises to the cell projection. It is found in the cilium. It localises to the cilium axoneme. Its subcellular location is the cilium basal body. Kinesin motor protein which is required for the anterograde intraflagellar transport (IFT) along the middle segment of the sensory neuron cilia together with the kinesin II motor complex (composed of klp-11, klp-20 and kap-1) and on its own, is required for IFT along the distal segment. In addition, regulates the length of cilia. May have a role during neurogenesis and axonal transport. This chain is Osmotic avoidance abnormal protein 3, found in Caenorhabditis elegans.